Consider the following 280-residue polypeptide: Urease accessory protein UreD 3 (280 aa).

This sequence belongs to the UreD family. As to quaternary structure, ureD, UreF and UreG form a complex that acts as a GTP-hydrolysis-dependent molecular chaperone, activating the urease apoprotein by helping to assemble the nickel containing metallocenter of UreC. The UreE protein probably delivers the nickel.

It is found in the cytoplasm. In terms of biological role, required for maturation of urease via the functional incorporation of the urease nickel metallocenter. This Bradyrhizobium sp. (strain ORS 278) protein is Urease accessory protein UreD 3.